We begin with the raw amino-acid sequence, 156 residues long: Small ribosomal subunit protein uS11 (156 aa).

The disordered stretch occupies residues 1-27; the sequence is MSEKEQKEVEAKESSGKAEERRETREK.

This sequence belongs to the universal ribosomal protein uS11 family. Part of the 30S ribosomal subunit.

Located on the platform of the 30S subunit. The sequence is that of Small ribosomal subunit protein uS11 from Thermofilum pendens (strain DSM 2475 / Hrk 5).